The sequence spans 463 residues: ATP synthase subunit beta 1 (463 aa).

152–159 (GGAGVGKT) lines the ATP pocket.

This sequence belongs to the ATPase alpha/beta chains family. In terms of assembly, F-type ATPases have 2 components, CF(1) - the catalytic core - and CF(0) - the membrane proton channel. CF(1) has five subunits: alpha(3), beta(3), gamma(1), delta(1), epsilon(1). CF(0) has three main subunits: a(1), b(2) and c(9-12). The alpha and beta chains form an alternating ring which encloses part of the gamma chain. CF(1) is attached to CF(0) by a central stalk formed by the gamma and epsilon chains, while a peripheral stalk is formed by the delta and b chains.

Its subcellular location is the cell inner membrane. It carries out the reaction ATP + H2O + 4 H(+)(in) = ADP + phosphate + 5 H(+)(out). In terms of biological role, produces ATP from ADP in the presence of a proton gradient across the membrane. The catalytic sites are hosted primarily by the beta subunits. This is ATP synthase subunit beta 1 from Shewanella frigidimarina (strain NCIMB 400).